A 250-amino-acid chain; its full sequence is MRHVYVGNFDYDTRHSDLERLFSKFGRVKRVDMKSGYAFVYFEDERDAEDAIRRTDNTTFGYGRRKLSVEWAKDFQGERGKPRDGKAVSNQRPTKTLFVINFDPIRTRERDMERHFEPYGKVLNVRMRRNFAFVQFATQEDATKALDSTHNSKLLDKVVSVEYALREAGEREDRYAGSRRRRSPSPVYRRRPSPDYTRRRSPEYDRYKGPAPYERRKSPDYGRRSSDYGRARARSPGYDRSRSPIQRARG.

2 RRM domains span residues 2 to 74 and 95 to 166; these read RHVY…WAKD and KTLF…YALR. Residues 170-250 are disordered; it reads EREDRYAGSR…SRSPIQRARG (81 aa). Residues 177-191 are compositionally biased toward basic residues; it reads GSRRRRSPSPVYRRR. Phosphoserine occurs at positions 183, 185, 201, 218, and 243. The segment covering 192 to 230 has biased composition (basic and acidic residues); sequence PSPDYTRRRSPEYDRYKGPAPYERRKSPDYGRRSSDYGR.

The protein belongs to the splicing factor SR family. RS subfamily. In terms of assembly, component of the spliceosome. Interacts with MOS14.

It localises to the nucleus speckle. The protein localises to the nucleus. Its subcellular location is the nucleoplasm. In terms of biological role, probably involved in intron recognition and spliceosome assembly. The protein is Serine/arginine-rich splicing factor RS31A (RS31A) of Arabidopsis thaliana (Mouse-ear cress).